We begin with the raw amino-acid sequence, 368 residues long: 3-dehydroquinate synthase (368 aa).

NAD(+) is bound by residues 109–113, 133–134, Lys146, Lys155, and 173–176; these read GVIGD, TS, and TLQT. Residues Glu188, His253, and His270 each contribute to the Zn(2+) site.

It belongs to the sugar phosphate cyclases superfamily. Dehydroquinate synthase family. Co(2+) is required as a cofactor. The cofactor is Zn(2+). Requires NAD(+) as cofactor.

Its subcellular location is the cytoplasm. It catalyses the reaction 7-phospho-2-dehydro-3-deoxy-D-arabino-heptonate = 3-dehydroquinate + phosphate. It functions in the pathway metabolic intermediate biosynthesis; chorismate biosynthesis; chorismate from D-erythrose 4-phosphate and phosphoenolpyruvate: step 2/7. In terms of biological role, catalyzes the conversion of 3-deoxy-D-arabino-heptulosonate 7-phosphate (DAHP) to dehydroquinate (DHQ). This is 3-dehydroquinate synthase from Synechococcus sp. (strain ATCC 27144 / PCC 6301 / SAUG 1402/1) (Anacystis nidulans).